The sequence spans 248 residues: Phycocyanobilin:ferredoxin oxidoreductase (248 aa).

This sequence belongs to the HY2 family.

It catalyses the reaction (2R,3Z)-phycocyanobilin + 4 oxidized [2Fe-2S]-[ferredoxin] = biliverdin IXalpha + 4 reduced [2Fe-2S]-[ferredoxin] + 4 H(+). Catalyzes the four-electron reduction of biliverdin IX-alpha (2-electron reduction at both the A and D rings); the reaction proceeds via an isolatable 2-electron intermediate, 181,182-dihydrobiliverdin. This is Phycocyanobilin:ferredoxin oxidoreductase (pcyA) from Synechocystis sp. (strain ATCC 27184 / PCC 6803 / Kazusa).